Reading from the N-terminus, the 419-residue chain is UDP-N-acetylglucosamine 1-carboxyvinyltransferase 2 (419 aa).

Position 24-25 (24-25) interacts with phosphoenolpyruvate; the sequence is KN. R94 contacts UDP-N-acetyl-alpha-D-glucosamine. C118 serves as the catalytic Proton donor. C118 is modified (2-(S-cysteinyl)pyruvic acid O-phosphothioketal). Residues 123–127, D307, and I329 contribute to the UDP-N-acetyl-alpha-D-glucosamine site; that span reads RPIDQ.

The protein belongs to the EPSP synthase family. MurA subfamily.

It is found in the cytoplasm. It carries out the reaction phosphoenolpyruvate + UDP-N-acetyl-alpha-D-glucosamine = UDP-N-acetyl-3-O-(1-carboxyvinyl)-alpha-D-glucosamine + phosphate. The protein operates within cell wall biogenesis; peptidoglycan biosynthesis. Cell wall formation. Adds enolpyruvyl to UDP-N-acetylglucosamine. This is UDP-N-acetylglucosamine 1-carboxyvinyltransferase 2 from Staphylococcus epidermidis (strain ATCC 12228 / FDA PCI 1200).